Reading from the N-terminus, the 522-residue chain is MAKFVIAGQADCPYYAKVELLADSLQSKLQDFHVHKIVKTPEEWKPWLQQLCADNGWTHGRSPIIWRELVDRGGKGLLIGGHNDFMEYARSYYGMTSGMLSEMMKNIAAENLAVTQELREEEETIRRQSKPLHVCVINAARSPAYHVLPSLVNGKILREEEIALHLHDSEENLEKLKGLEMEVFDLSFPFLKEISVTTDLPTAFQNAHIAIVLDDFDQGGKEDAIGDMETKVSFYKRVAEAINQTASKDIRVLVAGTGPLNSLVSILIDHTPSIPRQNIAAVAQVKERQAKSLLAKRLTVNSAGVCDVIVWGNVGGTTYTDVSRARVHGYDGAIWGPPSYSCSVSEMVHDNKWLEGEFLEQLQSRSHTIQDSLQHSADLSMAAAISSTLSYWWNGSPEGQLFSLAVCSEGFYNIPEGVVFSFPVMFHKGSWEVVQDIDMNEDMRVMLSSITAQLVEEKDLLLHPTNANHEKLLKVFGVTTDISTPSSVKLDKIMEETEKSSSEDTPEAAAAAVSTGDETVPS.

The interval 495 to 522 (EETEKSSSEDTPEAAAAAVSTGDETVPS) is disordered.

This sequence belongs to the LDH/MDH superfamily. MDH type 2 family.

The chain is Putative malate dehydrogenase 1B (MDH1B) from Branchiostoma floridae (Florida lancelet).